We begin with the raw amino-acid sequence, 308 residues long: Mycothiol acetyltransferase (308 aa).

N-acetyltransferase domains lie at 16–152 and 165–308; these read ETLA…RPLA and VTVR…RTES. A 1D-myo-inositol 2-(L-cysteinylamino)-2-deoxy-alpha-D-glucopyranoside-binding site is contributed by glutamate 47. Residue 91 to 93 participates in acetyl-CoA binding; it reads LVV. Residues glutamate 192, lysine 231, and glutamate 240 each coordinate 1D-myo-inositol 2-(L-cysteinylamino)-2-deoxy-alpha-D-glucopyranoside. Acetyl-CoA is bound by residues 244-246 and 251-257; these read LGV and QGGGLGK. A 1D-myo-inositol 2-(L-cysteinylamino)-2-deoxy-alpha-D-glucopyranoside-binding site is contributed by tyrosine 278.

This sequence belongs to the acetyltransferase family. MshD subfamily. In terms of assembly, monomer.

The catalysed reaction is 1D-myo-inositol 2-(L-cysteinylamino)-2-deoxy-alpha-D-glucopyranoside + acetyl-CoA = mycothiol + CoA + H(+). Its function is as follows. Catalyzes the transfer of acetyl from acetyl-CoA to desacetylmycothiol (Cys-GlcN-Ins) to form mycothiol. This Streptomyces avermitilis (strain ATCC 31267 / DSM 46492 / JCM 5070 / NBRC 14893 / NCIMB 12804 / NRRL 8165 / MA-4680) protein is Mycothiol acetyltransferase.